The primary structure comprises 344 residues: 2,3,4,5-tetrahydropyridine-2,6-dicarboxylate N-succinyltransferase (344 aa).

A Mg(2+)-binding site is contributed by glutamate 205. Catalysis depends on glutamate 221, which acts as the Acyl-anhydride intermediate. Residues arginine 223, glycine 238, serine 241, alanine 264, 279–280 (EA), 287–289 (GTK), lysine 304, and 317–320 (RRNS) contribute to the succinyl-CoA site.

Belongs to the type 2 tetrahydrodipicolinate N-succinyltransferase family. As to quaternary structure, homotrimer. The cofactor is Magnesium ions are not essential for catalysis..

The protein localises to the cytoplasm. The enzyme catalyses (S)-2,3,4,5-tetrahydrodipicolinate + succinyl-CoA + H2O = (S)-2-succinylamino-6-oxoheptanedioate + CoA. It functions in the pathway amino-acid biosynthesis; L-lysine biosynthesis via DAP pathway; LL-2,6-diaminopimelate from (S)-tetrahydrodipicolinate (succinylase route): step 1/3. Weakly inhibited by D-2-aminopimelate. Functionally, catalyzes the conversion of the cyclic tetrahydrodipicolinate (THDP) into the acyclic N-succinyl-L-2-amino-6-oxopimelate using succinyl-CoA. Displays succinyl transferase activity with L-2-aminopimelate and succinyl-CoA as substrates. The sequence is that of 2,3,4,5-tetrahydropyridine-2,6-dicarboxylate N-succinyltransferase from Pseudomonas aeruginosa (strain ATCC 15692 / DSM 22644 / CIP 104116 / JCM 14847 / LMG 12228 / 1C / PRS 101 / PAO1).